We begin with the raw amino-acid sequence, 299 residues long: Oxygen-dependent coproporphyrinogen-III oxidase (299 aa).

Position 92 (Ser92) interacts with substrate. A divalent metal cation is bound by residues His96 and His106. His106 acts as the Proton donor in catalysis. Position 108 to 110 (108 to 110 (NVR)) interacts with substrate. Residues His145 and His175 each coordinate a divalent metal cation. The interval 240-275 (YVEFNLVWDRGTLFGLQTGGRTESILMSMPPLVRWE) is important for dimerization. Position 258–260 (258–260 (GGR)) interacts with substrate.

The protein belongs to the aerobic coproporphyrinogen-III oxidase family. Homodimer. It depends on a divalent metal cation as a cofactor.

The protein localises to the cytoplasm. It catalyses the reaction coproporphyrinogen III + O2 + 2 H(+) = protoporphyrinogen IX + 2 CO2 + 2 H2O. It functions in the pathway porphyrin-containing compound metabolism; protoporphyrin-IX biosynthesis; protoporphyrinogen-IX from coproporphyrinogen-III (O2 route): step 1/1. Functionally, involved in the heme biosynthesis. Catalyzes the aerobic oxidative decarboxylation of propionate groups of rings A and B of coproporphyrinogen-III to yield the vinyl groups in protoporphyrinogen-IX. In Klebsiella pneumoniae (strain 342), this protein is Oxygen-dependent coproporphyrinogen-III oxidase.